A 125-amino-acid polypeptide reads, in one-letter code: Small ribosomal subunit protein bS6 (125 aa).

The interval Ala99–Glu125 is disordered. Residues Lys104–Thr113 are compositionally biased toward basic and acidic residues. Residues Glu116 to Glu125 show a composition bias toward acidic residues.

This sequence belongs to the bacterial ribosomal protein bS6 family.

Functionally, binds together with bS18 to 16S ribosomal RNA. The polypeptide is Small ribosomal subunit protein bS6 (Histophilus somni (strain 2336) (Haemophilus somnus)).